A 67-amino-acid chain; its full sequence is Conotoxin LeDr192 (67 aa).

An N-terminal signal peptide occupies residues 1 to 19 (MRCFPVFIILLLLIASAPC). The propeptide occupies 20 to 49 (FDARTKTDDDVPLSPLRDNLKRTIRTRLNI). Thr65 carries the threonine amide modification.

This sequence belongs to the conotoxin T superfamily. In terms of processing, contains 2 disulfide bonds that can be either 'C1-C3, C2-C4' or 'C1-C4, C2-C3', since these disulfide connectivities have been observed for conotoxins with cysteine framework V (for examples, see AC P0DQQ7 and AC P81755). Expressed by the venom duct.

The protein resides in the secreted. The chain is Conotoxin LeDr192 from Conus litteratus (Lettered cone).